The following is a 113-amino-acid chain: UPF0342 protein SEQ_0993 (113 aa).

The protein belongs to the UPF0342 family.

This chain is UPF0342 protein SEQ_0993, found in Streptococcus equi subsp. equi (strain 4047).